We begin with the raw amino-acid sequence, 375 residues long: MYLDHLTVQNFRNLKKLDVDFDPNVNIFIGKNAQGKTNLLEAIYFLALTRSHRTSSDRDLIGFDGEYTNLAGHVQKSQVTLNLRVLITKKGKKVWINRIEQAKLSKYVGQLNAILFSPEDLELIKGAPSLRRRFMDQEFGQINAEYLYFASKYRQVLIQKNNYLKQLAKGKAKDQVFLDVLSDQLAGIAAELIYRRFKFLTYLSHYASDAYTHISLGSEKLSIAYHPSVSDITADDTTEEIYQKILNSFNRNKASEIRKGTTTSGPHRDDIEFKLDGKNAHLYASQGQQRSIALSIKLAEIQLVHQLTDEYPLLLLDDVMSELDHGRQSALLNYIHGKTQTFITTTDLEGISWDIIKKPRVYHIQSGTISLEKEN.

Gly30 to Thr37 provides a ligand contact to ATP.

Belongs to the RecF family.

It localises to the cytoplasm. Functionally, the RecF protein is involved in DNA metabolism; it is required for DNA replication and normal SOS inducibility. RecF binds preferentially to single-stranded, linear DNA. It also seems to bind ATP. The sequence is that of DNA replication and repair protein RecF from Lactobacillus acidophilus (strain ATCC 700396 / NCK56 / N2 / NCFM).